Here is a 134-residue protein sequence, read N- to C-terminus: Ribosome-binding factor A (134 aa).

It belongs to the RbfA family. In terms of assembly, monomer. Binds 30S ribosomal subunits, but not 50S ribosomal subunits or 70S ribosomes.

The protein resides in the cytoplasm. One of several proteins that assist in the late maturation steps of the functional core of the 30S ribosomal subunit. Associates with free 30S ribosomal subunits (but not with 30S subunits that are part of 70S ribosomes or polysomes). Required for efficient processing of 16S rRNA. May interact with the 5'-terminal helix region of 16S rRNA. The polypeptide is Ribosome-binding factor A (Cyanothece sp. (strain PCC 7425 / ATCC 29141)).